The chain runs to 430 residues: Adenylosuccinate synthetase (430 aa).

Residues 12–18 (GDEGKGK) and 40–42 (GHT) each bind GTP. The active-site Proton acceptor is the aspartate 13. Residues aspartate 13 and glycine 40 each contribute to the Mg(2+) site. Residues 13–16 (DEGK), 38–41 (NAGH), threonine 130, arginine 144, glutamine 224, threonine 239, and arginine 303 contribute to the IMP site. Histidine 41 functions as the Proton donor in the catalytic mechanism. A substrate-binding site is contributed by 299–305 (TNTGRAR). GTP is bound by residues arginine 305, 331–333 (KLD), and 413–415 (STS).

This sequence belongs to the adenylosuccinate synthetase family. Homodimer. Requires Mg(2+) as cofactor.

The protein resides in the cytoplasm. It catalyses the reaction IMP + L-aspartate + GTP = N(6)-(1,2-dicarboxyethyl)-AMP + GDP + phosphate + 2 H(+). Its pathway is purine metabolism; AMP biosynthesis via de novo pathway; AMP from IMP: step 1/2. Plays an important role in the de novo pathway of purine nucleotide biosynthesis. Catalyzes the first committed step in the biosynthesis of AMP from IMP. The sequence is that of Adenylosuccinate synthetase from Hyphomonas neptunium (strain ATCC 15444).